The sequence spans 1032 residues: GPI inositol-deacylase (1032 aa).

An N-linked (GlcNAc...) asparagine glycan is attached at Asn-12. Residues 15–35 (ILTLVSFFGLVLFYLTWYLYT) form a helical membrane-spanning segment. The active site involves Ser-195. N-linked (GlcNAc...) asparagine glycans are attached at residues Asn-520 and Asn-555. 2 helical membrane passes run 703 to 723 (LATISFCVSIILLALVFQVKH) and 740 to 760 (ICSPWVFGSILFTLSILTPIM). Asn-784 carries N-linked (GlcNAc...) asparagine glycosylation. The next 3 helical transmembrane spans lie at 805–825 (LWFIGPVFFVMGLGIVSLTFY), 861–880 (WANRRIIGVLFVLLVIPIYM), and 884–903 (FAYVVSCIIQSIQVIKILVA). Asn-907 carries N-linked (GlcNAc...) asparagine glycosylation. The chain crosses the membrane as a helical span at residues 916–936 (SLLMLMLWVLPINVPILVVFV). N-linked (GlcNAc...) asparagine glycans are attached at residues Asn-938 and Asn-942. A run of 2 helical transmembrane segments spans residues 943-963 (WTTPFSSHHNFLAILPVILLM) and 985-1005 (AFLAYYVFYCLVYGIRHTYWI).

The protein belongs to the GPI inositol-deacylase family.

The protein resides in the endoplasmic reticulum membrane. Its function is as follows. Involved in inositol deacylation of GPI-anchored proteins which plays important roles in the quality control and ER-associated degradation of GPI-anchored proteins. In Debaryomyces hansenii (strain ATCC 36239 / CBS 767 / BCRC 21394 / JCM 1990 / NBRC 0083 / IGC 2968) (Yeast), this protein is GPI inositol-deacylase (BST1).